The following is a 321-amino-acid chain: Glucokinase (321 aa).

8-13 (GDVGGT) provides a ligand contact to ATP.

This sequence belongs to the bacterial glucokinase family.

The protein localises to the cytoplasm. It carries out the reaction D-glucose + ATP = D-glucose 6-phosphate + ADP + H(+). This chain is Glucokinase, found in Shigella sonnei (strain Ss046).